The primary structure comprises 124 residues: Acidic phospholipase A2 (124 aa).

Disulfide bonds link cysteine 26/cysteine 117, cysteine 28/cysteine 44, cysteine 43/cysteine 97, cysteine 49/cysteine 124, cysteine 50/cysteine 90, cysteine 57/cysteine 83, and cysteine 77/cysteine 88. Positions 27, 29, and 31 each coordinate Ca(2+). Residue histidine 47 is part of the active site. Position 48 (aspartate 48) interacts with Ca(2+). Residue glutamate 89 is part of the active site.

Belongs to the phospholipase A2 family. Group II subfamily. D49 sub-subfamily. Ca(2+) serves as cofactor. As to expression, expressed by the venom gland.

It is found in the secreted. It catalyses the reaction a 1,2-diacyl-sn-glycero-3-phosphocholine + H2O = a 1-acyl-sn-glycero-3-phosphocholine + a fatty acid + H(+). In terms of biological role, snake venom phospholipase A2 (PLA2) that inhibits collagen- and ADP-induced platelet aggregation. PLA2 catalyzes the calcium-dependent hydrolysis of the 2-acyl groups in 3-sn-phosphoglycerides. This Bothrops jararaca (Jararaca) protein is Acidic phospholipase A2.